The following is a 103-amino-acid chain: Small ribosomal subunit protein uS10c (103 aa).

The protein belongs to the universal ribosomal protein uS10 family. In terms of assembly, part of the 30S ribosomal subunit.

The protein localises to the plastid. It localises to the chloroplast. Functionally, involved in the binding of tRNA to the ribosomes. This is Small ribosomal subunit protein uS10c from Emiliania huxleyi (Coccolithophore).